Here is a 91-residue protein sequence, read N- to C-terminus: Large ribosomal subunit protein uL29 (91 aa).

The segment at 67-91 (AAPLAESSAPAKTKSRARKSKKEAL) is disordered. The segment covering 79 to 91 (TKSRARKSKKEAL) has biased composition (basic residues).

This sequence belongs to the universal ribosomal protein uL29 family.

The polypeptide is Large ribosomal subunit protein uL29 (Acidobacterium capsulatum (strain ATCC 51196 / DSM 11244 / BCRC 80197 / JCM 7670 / NBRC 15755 / NCIMB 13165 / 161)).